We begin with the raw amino-acid sequence, 96 residues long: Large ribosomal subunit protein bL28 (96 aa).

Residues 1–22 (MSRSCELTGKGVQSGNNVSHAN) are compositionally biased toward polar residues. The tract at residues 1–24 (MSRSCELTGKGVQSGNNVSHANNK) is disordered.

It belongs to the bacterial ribosomal protein bL28 family.

The protein is Large ribosomal subunit protein bL28 of Sinorhizobium medicae (strain WSM419) (Ensifer medicae).